The following is a 542-amino-acid chain: Homeobox protein ceh-18 (542 aa).

Positions Asn-243 to Leu-252 are enriched in polar residues. The interval Asn-243 to Val-264 is disordered. In terms of domain architecture, POU-specific spans Asp-290 to Glu-364. The segment at residues Arg-421–Asp-480 is a DNA-binding region (homeobox). Residues Leu-514–Leu-542 are disordered. Residues Cys-517–Ser-530 are compositionally biased toward polar residues.

This sequence belongs to the POU transcription factor family. Interacts with akir-1. Expressed in the gonadal sheath cells that signal the oocyte, but not in the oocyte.

It localises to the nucleus. Directs gonadal sheath cell differentiation and function. Also directs gonad migration and plays a role in specifying the differentiated phenotypes of epidermal cells during postembryonic development. Plays a role in oogenesis, regulating a sheath cell signal that causes oocytes to maintain diakinesis arrest during meiosis. Negatively regulates oocyte maturation, ovulation and MAPK activation in oocytes when sperm are not available for fertilization. May be recruited by akir-1 to the promoter regions of antimicrobial peptide genes to control gene expression in response to fungal infection. In Caenorhabditis elegans, this protein is Homeobox protein ceh-18.